We begin with the raw amino-acid sequence, 349 residues long: Protein RecA (349 aa).

65 to 72 (GPESSGKT) provides a ligand contact to ATP. The interval 329–349 (KASDQTAAHDETEEEPDLLES) is disordered. The span at 339-349 (ETEEEPDLLES) shows a compositional bias: acidic residues.

Belongs to the RecA family.

Its subcellular location is the cytoplasm. Can catalyze the hydrolysis of ATP in the presence of single-stranded DNA, the ATP-dependent uptake of single-stranded DNA by duplex DNA, and the ATP-dependent hybridization of homologous single-stranded DNAs. It interacts with LexA causing its activation and leading to its autocatalytic cleavage. The polypeptide is Protein RecA (Acinetobacter baylyi (strain ATCC 33305 / BD413 / ADP1)).